The sequence spans 86 residues: Cell division topological specificity factor (86 aa).

The protein belongs to the MinE family.

Prevents the cell division inhibition by proteins MinC and MinD at internal division sites while permitting inhibition at polar sites. This ensures cell division at the proper site by restricting the formation of a division septum at the midpoint of the long axis of the cell. In Shewanella loihica (strain ATCC BAA-1088 / PV-4), this protein is Cell division topological specificity factor.